We begin with the raw amino-acid sequence, 672 residues long: Ubiquitin carboxyl-terminal hydrolase 19 (672 aa).

Residues 11 to 31 (NSFTQLILTLFFVSIGLLYFV) form a helical membrane-spanning segment. Zn(2+) is bound by residues cysteine 64, cysteine 67, cysteine 75, cysteine 78, cysteine 84, cysteine 88, histidine 97, and cysteine 101. The MYND-type zinc finger occupies 64–101 (CSVCGKATTKKCSRCKSVRYCSAACQTSDWKSGHKLKC). The 307-residue stretch at 174-480 (CGLTNCGNSC…RAYMLLYSRV (307 aa)) folds into the USP domain. Residue cysteine 183 is the Nucleophile of the active site. The active-site Proton acceptor is histidine 439. The segment at 484–672 (PSNLRSEESQ…HSDTEMIDAQ (189 aa)) is disordered. Residues 488–499 (RSEESQDEKKTD) are compositionally biased toward basic and acidic residues. Polar residues predominate over residues 500–527 (TLNTESNQDGSVESSGVGTNDTSVSSLC). Basic and acidic residues-rich tracts occupy residues 533-543 (HSEDPEYEKES) and 553-594 (EEGK…KEDP). Positions 606–615 (LDITTPSPSA) are enriched in polar residues. Over residues 623 to 666 (ENERSDTESKPLEKEHSDTESNKPLEKEHLDSESKPLEKEHSDT) the composition is skewed to basic and acidic residues.

This sequence belongs to the peptidase C19 family.

It localises to the membrane. The catalysed reaction is Thiol-dependent hydrolysis of ester, thioester, amide, peptide and isopeptide bonds formed by the C-terminal Gly of ubiquitin (a 76-residue protein attached to proteins as an intracellular targeting signal).. In terms of biological role, recognizes and hydrolyzes the peptide bond at the C-terminal Gly of ubiquitin. Involved in the processing of poly-ubiquitin precursors as well as that of ubiquitinated proteins. In Arabidopsis thaliana (Mouse-ear cress), this protein is Ubiquitin carboxyl-terminal hydrolase 19 (UBP19).